The primary structure comprises 417 residues: Probable medium-chain specific acyl-CoA dehydrogenase 10, mitochondrial (417 aa).

The N-terminal 15 residues, 1 to 15, are a transit peptide targeting the mitochondrion; that stretch reads MLSRIATSSLGLSRS. Residues 148–157 and 181–183 each bind FAD; these read YCVTEPGAGS and WIT. Substrate is bound at residue Ser157. A substrate-binding site is contributed by 268–271; that stretch reads DMTR. FAD is bound by residues 306-307 and 364-368; these read HQ and QIFGG. Glu391 acts as the Proton acceptor in catalysis. Gly392 serves as a coordination point for substrate. Position 393–395 (393–395) interacts with FAD; the sequence is TSQ.

This sequence belongs to the acyl-CoA dehydrogenase family. As to quaternary structure, homotetramer. FAD serves as cofactor. As to expression, expressed in the epidermis and intestine.

It is found in the mitochondrion matrix. It catalyses the reaction a medium-chain 2,3-saturated fatty acyl-CoA + oxidized [electron-transfer flavoprotein] + H(+) = a medium-chain (2E)-enoyl-CoA + reduced [electron-transfer flavoprotein]. It participates in lipid metabolism; mitochondrial fatty acid beta-oxidation. In terms of biological role, this enzyme is specific for acyl chain lengths of 4 to 16. The polypeptide is Probable medium-chain specific acyl-CoA dehydrogenase 10, mitochondrial (acdh-10) (Caenorhabditis elegans).